Reading from the N-terminus, the 400-residue chain is Nicotinate phosphoribosyltransferase (400 aa).

His220 bears the Phosphohistidine; by autocatalysis mark.

The protein belongs to the NAPRTase family. Post-translationally, transiently phosphorylated on a His residue during the reaction cycle. Phosphorylation strongly increases the affinity for substrates and increases the rate of nicotinate D-ribonucleotide production. Dephosphorylation regenerates the low-affinity form of the enzyme, leading to product release.

The catalysed reaction is nicotinate + 5-phospho-alpha-D-ribose 1-diphosphate + ATP + H2O = nicotinate beta-D-ribonucleotide + ADP + phosphate + diphosphate. It functions in the pathway cofactor biosynthesis; NAD(+) biosynthesis; nicotinate D-ribonucleotide from nicotinate: step 1/1. In terms of biological role, catalyzes the synthesis of beta-nicotinate D-ribonucleotide from nicotinate and 5-phospho-D-ribose 1-phosphate at the expense of ATP. This is Nicotinate phosphoribosyltransferase from Shigella sonnei (strain Ss046).